We begin with the raw amino-acid sequence, 441 residues long: Serine carboxypeptidase-like 3 (441 aa).

The first 30 residues, 1 to 30 (MASNYVFSVLRSLLLLIHTVFLGQHHVSSA), serve as a signal peptide directing secretion. Cystine bridges form between Cys-88/Cys-331, Cys-252/Cys-266, and Cys-290/Cys-297. Asn-109 carries N-linked (GlcNAc...) asparagine glycosylation. Ser-184 is a catalytic residue. Asn-350 carries an N-linked (GlcNAc...) asparagine glycan. The active site involves Asp-366. Asn-382 carries an N-linked (GlcNAc...) asparagine glycan. His-419 is an active-site residue.

It belongs to the peptidase S10 family. Expressed in roots.

It is found in the secreted. Its function is as follows. Probable carboxypeptidase. The sequence is that of Serine carboxypeptidase-like 3 (SCPL3) from Arabidopsis thaliana (Mouse-ear cress).